We begin with the raw amino-acid sequence, 99 residues long: NADH-quinone oxidoreductase subunit K (99 aa).

3 helical membrane-spanning segments follow: residues 3-23 (PTYYLLLSALLFSIGAVGVLV), 28-48 (IVVFMCVELMLNAVNLTLVTF), and 59-79 (VMAFFVMVVAAAEVVVGLAII).

The protein belongs to the complex I subunit 4L family. As to quaternary structure, NDH-1 is composed of 14 different subunits. Subunits NuoA, H, J, K, L, M, N constitute the membrane sector of the complex.

Its subcellular location is the cell membrane. It catalyses the reaction a quinone + NADH + 5 H(+)(in) = a quinol + NAD(+) + 4 H(+)(out). Its function is as follows. NDH-1 shuttles electrons from NADH, via FMN and iron-sulfur (Fe-S) centers, to quinones in the respiratory chain. The immediate electron acceptor for the enzyme in this species is believed to be a menaquinone. Couples the redox reaction to proton translocation (for every two electrons transferred, four hydrogen ions are translocated across the cytoplasmic membrane), and thus conserves the redox energy in a proton gradient. This is NADH-quinone oxidoreductase subunit K from Saccharopolyspora erythraea (strain ATCC 11635 / DSM 40517 / JCM 4748 / NBRC 13426 / NCIMB 8594 / NRRL 2338).